We begin with the raw amino-acid sequence, 686 residues long: Lysophospholipase 3 (686 aa).

The N-terminal stretch at 1 to 26 (MIRPLCSKIIISYIFAISQFLLAANA) is a signal peptide. Positions 39-592 (SCPDDINLVR…KNYCWNGTLD (554 aa)) constitute a PLA2c domain. N-linked (GlcNAc...) asparagine glycosylation is found at N56, N82, N129, N166, N221, N283, N313, N351, N495, N519, N547, N571, N588, and N614. The GPI-anchor amidated asparagine moiety is linked to residue N659. Positions 660-686 (SGSHLSGISVKFSAMIMLTLLMFTGAV) are cleaved as a propeptide — removed in mature form.

It belongs to the lysophospholipase family.

The protein localises to the cell membrane. The catalysed reaction is a 1-acyl-sn-glycero-3-phosphocholine + H2O = sn-glycerol 3-phosphocholine + a fatty acid + H(+). In terms of biological role, sequentially removes both fatty acyl groups from diacylglycerophospholipids and therefore has both phospholipase A and lysophospholipase activities. Substrate preference is phosphatidylserine &gt; phosphatidylinositol. Does not cleave phosphatidylcholine, phosphatidylethanolamine, phosphatidic acid and phosphatidylinositol-bisphosphate. Mainly responsible for the degradation of phosphatidylinositol in vivo. The protein is Lysophospholipase 3 (PLB3) of Saccharomyces cerevisiae (strain ATCC 204508 / S288c) (Baker's yeast).